A 385-amino-acid polypeptide reads, in one-letter code: Probable caffeine synthase 4 (385 aa).

S-adenosyl-L-homocysteine contacts are provided by Tyr18, Cys62, Asn67, Asp101, Leu102, Ser140, and Phe141. Caffeine contacts are provided by Tyr158, Gln161, and Phe162. Asn179 contacts Mg(2+). Residue Thr238 participates in caffeine binding. 3 residues coordinate Mg(2+): Asp261, Phe263, and Asn264. Tyr369 serves as a coordination point for caffeine.

The protein belongs to the methyltransferase superfamily. Type-7 methyltransferase family. Mg(2+) is required as a cofactor. In terms of tissue distribution, expressed in roots, stems, young and old leaves.

The protein operates within alkaloid biosynthesis. In terms of biological role, may be involved in the biosynthesis of caffeine. The chain is Probable caffeine synthase 4 from Coffea arabica (Arabian coffee).